A 51-amino-acid polypeptide reads, in one-letter code: Large ribosomal subunit protein eL39 (51 aa).

This sequence belongs to the eukaryotic ribosomal protein eL39 family.

The protein is Large ribosomal subunit protein eL39 of Methanococcoides burtonii (strain DSM 6242 / NBRC 107633 / OCM 468 / ACE-M).